The sequence spans 876 residues: Nitrogen regulatory protein areA (876 aa).

The segment covering Met1–Gly11 has biased composition (gly residues). Disordered stretches follow at residues Met1 to Ser65, Gln137 to Ser159, Ile192 to Phe248, Phe393 to Gly413, Tyr451 to Phe498, and Ser573 to Thr672. Polar residues-rich tracts occupy residues Asp198–Thr211, Gly399–Gln408, and Gln455–Gly480. Residues Val602–Arg611 are compositionally biased toward basic and acidic residues. Over residues Ala615 to Pro640 the composition is skewed to polar residues. The GATA-type zinc-finger motif lies at Cys673–Cys697. Residues Asn721–Lys742 constitute a DNA-binding region (H-T-H motif). Composition is skewed to polar residues over residues Ser724 to Arg734 and Lys742 to Ser766. The segment at Ser724–Asn856 is disordered. 2 stretches are compositionally biased toward low complexity: residues Pro782 to Pro798 and Ser828 to Ala855.

In terms of assembly, interacts with nmrA.

It localises to the nucleus. Transcription activator that binds the consensus DNA element 5'-CGATAG-3' and mediates nitrogen metabolite repression. Activates the transcription of uapA. The protein is Nitrogen regulatory protein areA (areA) of Emericella nidulans (strain FGSC A4 / ATCC 38163 / CBS 112.46 / NRRL 194 / M139) (Aspergillus nidulans).